We begin with the raw amino-acid sequence, 390 residues long: 5-hydroxytryptamine receptor 1B (390 aa).

The Extracellular segment spans residues 1 to 46 (MEEPGAQCAPPLAAGSQIAVPQANLSAAHSHNCSAEGYIYQDSIAL). 2 N-linked (GlcNAc...) asparagine glycosylation sites follow: Asn-24 and Asn-32. The chain crosses the membrane as a helical span at residues 47 to 72 (PWKVLLVLLLALFTLATTLSNAFVVA). Residues 73 to 86 (TVYRTRKLHTPANY) are Cytoplasmic-facing. Residues 87–111 (LIASLAVTDLLVSILVMPISTMYTV) traverse the membrane as a helical segment. Over 112–119 (TGRWTLGQ) the chain is Extracellular. Residues 120–145 (VVCDLWLSSDITCCTASIMHLCVIAL) traverse the membrane as a helical segment. Cys-122 and Cys-199 form a disulfide bridge. The ergotamine site is built by Asp-129 and Thr-134. A DRY motif; important for ligand-induced conformation changes and signaling motif is present at residues 146 to 148 (DRY). Topologically, residues 146 to 165 (DRYWAITDAVEYSAKRTPKR) are cytoplasmic. A helical membrane pass occupies residues 166–184 (AAIMIRLVWVFSICISLPP). Residues 185 to 205 (FFWRQAKAEEEVSECLVNTDH) lie on the Extracellular side of the membrane. Val-201 contributes to the ergotamine binding site. A helical transmembrane segment spans residues 206 to 229 (VLYTVYSTVGAFYLPTLLLIALYG). Topologically, residues 230-315 (RIYVEARSRI…AARERKATKT (86 aa)) are cytoplasmic. The segment covering 260-272 (SPGSTTSVTSINS) has biased composition (polar residues). Residues 260–282 (SPGSTTSVTSINSRAPDVPSESG) are disordered. The chain crosses the membrane as a helical span at residues 316 to 337 (LGIILGVFIVCWLPFFIISLVM). The Extracellular segment spans residues 338–347 (PICKDACWFH). A helical transmembrane segment spans residues 348 to 370 (QAIFDFFTWLGYVNSLINPIIYT). The NPxxY motif; important for ligand-induced conformation changes and signaling motif lies at 365–369 (NPIIY). Residues 371-390 (MSNEDFKQAFHKLIRFKCTS) lie on the Cytoplasmic side of the membrane. Cys-388 carries S-palmitoyl cysteine lipidation.

The protein belongs to the G-protein coupled receptor 1 family. As to quaternary structure, homodimer. Heterodimer with HTR1D. In terms of processing, phosphorylated. Desensitization of the receptor may be mediated by its phosphorylation. Palmitoylated.

Its subcellular location is the cell membrane. In terms of biological role, G-protein coupled receptor for 5-hydroxytryptamine (serotonin). Also functions as a receptor for ergot alkaloid derivatives, various anxiolytic and antidepressant drugs and other psychoactive substances, such as lysergic acid diethylamide (LSD). Ligand binding causes a conformation change that triggers signaling via guanine nucleotide-binding proteins (G proteins) and modulates the activity of downstream effectors, such as adenylate cyclase. HTR1B is coupled to G(i)/G(o) G alpha proteins and mediates inhibitory neurotransmission by inhibiting adenylate cyclase activity. Arrestin family members inhibit signaling via G proteins and mediate activation of alternative signaling pathways. Regulates the release of 5-hydroxytryptamine, dopamine and acetylcholine in the brain, and thereby affects neural activity, nociceptive processing, pain perception, mood and behavior. Besides, plays a role in vasoconstriction of cerebral arteries. The sequence is that of 5-hydroxytryptamine receptor 1B (HTR1B) from Oryctolagus cuniculus (Rabbit).